Consider the following 844-residue polypeptide: Saxiphilin (844 aa).

Residues 1–19 (MAPTFQTALFFTIISLSFA) form the signal peptide. The 81-residue stretch at 26 to 106 (VRWCAISDLE…IAEPYSSNRD (81 aa)) folds into the Transferrin-like 1; first part domain. 19 disulfides stabilise this stretch: Cys-29–Cys-64, Cys-39–Cys-55, Cys-110–Cys-130, Cys-141–Cys-148, Cys-150–Cys-172, Cys-180–Cys-202, Cys-222–Cys-244, Cys-277–Cys-360, Cys-322–Cys-335, Cys-332–Cys-343, Cys-388–Cys-402, Cys-495–Cys-527, Cys-505–Cys-518, Cys-552–Cys-839, Cys-570–Cys-799, Cys-607–Cys-685, Cys-641–Cys-655, Cys-652–Cys-668, and Cys-725–Cys-739. 2 Thyroglobulin type-1 domains span residues 107 to 172 (LQKC…RATC) and 177 to 244 (LPKC…PATC). The absent in transferrins stretch occupies residues 109–249 (KCLKERQQAL…IPATCQKHDL (141 aa)). In terms of domain architecture, Transferrin-like 1; second part spans 245–482 (QKHDLVTTCH…LFHAMKALTG (238 aa)). Residues 492–828 (VRWCTINKLE…YYTTVYGASR (337 aa)) enclose the Transferrin-like 2 domain.

This sequence belongs to the transferrin family. As to quaternary structure, monomer. As to expression, plasma. Highest levels of transcripts found in the liver, the lung, the pancreas and the brain.

It localises to the secreted. In terms of biological role, binds specifically to the neurotoxin saxitoxin. Its physiological role may be to transport or sequester an endogenous organic molecule other than Fe(3+). It may participate in a detoxification mechanism for neutralizing a microbial toxin. In Aquarana catesbeiana (American bullfrog), this protein is Saxiphilin.